Here is a 546-residue protein sequence, read N- to C-terminus: MLLQLYRSVVVRLPQAIRVKSTPLRLCIQACSTNDSLEPQHPSLTFSDDNSRTRRWKVMGTLLGLGVVLVYHEHRCRASQESPRMYSKEDVRSHNNPKTGVWVTLGSEVFDVTKFVDLHPGGPSKLMLAAGGPLEPFWALYAVHNQPHVRELLAEYKIGELNPEDSMSPSVEASDPYADDPIRHPALRINSQRPFNAEPPPELLTEGYITPNPIFFTRNHLPVPNLDPHTYRLHVVGAPGGQSLSLSLDDLHKFPKHEVTVTLQCAGNRRSEMSKVKEVKGLEWRTGAISTARWAGARLCDVLAQAGHRLCDSEAHVCFEGLDSDPTGTAYGASIPLARAMDPEAEVLLAYEMNGQPLPRDHGFPVRVVVPGVVGARHVKWLGRVSVESEESYSHWQRRDYKGFSPSVDWDTVNFDLAPSIQELPIQSAITQPQDGAIVESGEVTIKGYAWSGGGRAVIRVDVSVDGGLTWQEAELEGEEQCPRKAWAWRIWQLKAQVPAEQKELNIICKAVDDSYNVQPDTVAPIWNLRGVLSNAWHRVHVQVVP.

A mitochondrion-targeting transit peptide spans 1 to 80 (MLLQLYRSVV…YHEHRCRASQ (80 aa)). The Cytochrome b5 heme-binding domain maps to 83–162 (PRMYSKEDVR…LAEYKIGELN (80 aa)). Residue His119 coordinates heme b. Ser124 carries the phosphoserine modification. Heme b contacts are provided by His144, Gln146, and His148. The tract at residues 166 to 175 (SMSPSVEASD) is hinge. Positions 176-402 (PYADDPIRHP…YSHWQRRDYK (227 aa)) are moco domain. Mo-molybdopterin-binding positions include 216–220 (FTRNH), Cys265, Asp323, His362, Arg367, and 378–380 (HVK). Positions 403–539 (GFSPSVDWDT…RGVLSNAWHR (137 aa)) are homodimerization.

In terms of assembly, homodimer. It depends on heme b as a cofactor. Mo-molybdopterin serves as cofactor.

It localises to the mitochondrion intermembrane space. It catalyses the reaction sulfite + O2 + H2O = sulfate + H2O2. It participates in energy metabolism; sulfur metabolism. Functionally, catalyzes the oxidation of sulfite to sulfate, the terminal reaction in the oxidative degradation of sulfur-containing amino acids. The chain is Sulfite oxidase, mitochondrial (Suox) from Mus musculus (Mouse).